The following is a 480-amino-acid chain: ATP synthase subunit beta 1 (480 aa).

154–161 provides a ligand contact to ATP; sequence GGAGVGKT.

It belongs to the ATPase alpha/beta chains family. As to quaternary structure, F-type ATPases have 2 components, CF(1) - the catalytic core - and CF(0) - the membrane proton channel. CF(1) has five subunits: alpha(3), beta(3), gamma(1), delta(1), epsilon(1). CF(0) has four main subunits: a(1), b(1), b'(1) and c(9-12).

The protein resides in the cell inner membrane. It carries out the reaction ATP + H2O + 4 H(+)(in) = ADP + phosphate + 5 H(+)(out). Functionally, produces ATP from ADP in the presence of a proton gradient across the membrane. The catalytic sites are hosted primarily by the beta subunits. The protein is ATP synthase subunit beta 1 of Chlorobaculum tepidum (strain ATCC 49652 / DSM 12025 / NBRC 103806 / TLS) (Chlorobium tepidum).